The primary structure comprises 272 residues: 5'-nucleotidase SurE (272 aa).

Asp8, Asp9, Ser39, and Asn96 together coordinate a divalent metal cation.

This sequence belongs to the SurE nucleotidase family. Requires a divalent metal cation as cofactor.

The protein localises to the cytoplasm. It catalyses the reaction a ribonucleoside 5'-phosphate + H2O = a ribonucleoside + phosphate. Its function is as follows. Nucleotidase that shows phosphatase activity on nucleoside 5'-monophosphates. This chain is 5'-nucleotidase SurE, found in Heliobacterium modesticaldum (strain ATCC 51547 / Ice1).